The chain runs to 526 residues: Hyaluronidase-5 (526 aa).

Positions 1 to 35 (MRVLYFKHSFFRSLLKSNGLPQTLLVFLLIPCYLT) are cleaved as a signal peptide. 5 disulfide bridges follow: C60–C351, C223–C237, C376–C387, C381–C435, and C437–C443. Residue E147 is the Proton donor of the active site. N165 and N179 each carry an N-linked (GlcNAc...) asparagine glycan.

Belongs to the glycosyl hydrolase 56 family. Expressed in testis, epididymal sperm and epididymides (at protein level). Expressed at highest levels in testis with lesser amounts in epididymal sperm.

It localises to the cell membrane. The protein localises to the cytoplasmic vesicle. The protein resides in the secretory vesicle. Its subcellular location is the acrosome membrane. It is found in the secreted. The enzyme catalyses Random hydrolysis of (1-&gt;4)-linkages between N-acetyl-beta-D-glucosamine and D-glucuronate residues in hyaluronate.. Functionally, catalyzes the hydrolysis of hyaluronan into smaller oligosaccharide fragments. Does not appear to be essential for fertilization. In Mus musculus (Mouse), this protein is Hyaluronidase-5.